The sequence spans 134 residues: Large ribosomal subunit protein uL16c (134 aa).

Residues 1 to 21 (MLSPKRTKYRKHHRGRMRGKA) form a disordered region.

Belongs to the universal ribosomal protein uL16 family. In terms of assembly, part of the 50S ribosomal subunit.

The protein localises to the plastid. Its subcellular location is the chloroplast. The protein is Large ribosomal subunit protein uL16c of Chlorella vulgaris (Green alga).